The chain runs to 282 residues: HTH-type transcriptional activator RhaR (282 aa).

One can recognise an HTH araC/xylS-type domain in the interval 179-277 (DKLITALANS…GMTPSQWRHL (99 aa)). DNA-binding regions (H-T-H motif) lie at residues 196–217 (DAFCQQEQCSERVLRQQFRAQT) and 244–267 (ISEISMQCGFEDSNYFSVVFTRET).

In terms of assembly, binds DNA as a dimer.

It localises to the cytoplasm. Functionally, activates expression of the rhaSR operon in response to L-rhamnose. The polypeptide is HTH-type transcriptional activator RhaR (Salmonella arizonae (strain ATCC BAA-731 / CDC346-86 / RSK2980)).